Consider the following 185-residue polypeptide: Adenylyl-sulfate kinase (185 aa).

ATP is bound at residue 13-20 (GLSGAGKS). Serine 86 acts as the Phosphoserine intermediate in catalysis.

Belongs to the APS kinase family.

The catalysed reaction is adenosine 5'-phosphosulfate + ATP = 3'-phosphoadenylyl sulfate + ADP + H(+). Its pathway is sulfur metabolism; hydrogen sulfide biosynthesis; sulfite from sulfate: step 2/3. In terms of biological role, catalyzes the synthesis of activated sulfate. This Myxococcus xanthus (strain DK1622) protein is Adenylyl-sulfate kinase.